The sequence spans 421 residues: Queuine tRNA-ribosyltransferase accessory subunit 2 (421 aa).

The Zn(2+) site is built by cysteine 328, cysteine 330, cysteine 333, and histidine 359.

The protein belongs to the queuine tRNA-ribosyltransferase family. QTRT2 subfamily. In terms of assembly, heterodimer of a catalytic subunit and an accessory subunit. It depends on Zn(2+) as a cofactor.

It localises to the cytoplasm. Functionally, non-catalytic subunit of the queuine tRNA-ribosyltransferase (TGT) that catalyzes the base-exchange of a guanine (G) residue with queuine (Q) at position 34 (anticodon wobble position) in tRNAs with GU(N) anticodons (tRNA-Asp, -Asn, -His and -Tyr), resulting in the hypermodified nucleoside queuosine (7-(((4,5-cis-dihydroxy-2-cyclopenten-1-yl)amino)methyl)-7-deazaguanosine). This Aedes aegypti (Yellowfever mosquito) protein is Queuine tRNA-ribosyltransferase accessory subunit 2.